We begin with the raw amino-acid sequence, 94 residues long: Small ribosomal subunit protein bS6 (94 aa).

It belongs to the bacterial ribosomal protein bS6 family.

In terms of biological role, binds together with bS18 to 16S ribosomal RNA. In Desulforudis audaxviator (strain MP104C), this protein is Small ribosomal subunit protein bS6.